A 129-amino-acid chain; its full sequence is NADPH-dependent 7-cyano-7-deazaguanine reductase (129 aa).

Cys-43 (thioimide intermediate) is an active-site residue. Residue Asp-50 is the Proton donor of the active site. Substrate is bound by residues 65-67 and 84-85; these read VEL and HE.

This sequence belongs to the GTP cyclohydrolase I family. QueF type 1 subfamily.

It localises to the cytoplasm. It carries out the reaction 7-aminomethyl-7-carbaguanine + 2 NADP(+) = 7-cyano-7-deazaguanine + 2 NADPH + 3 H(+). It participates in tRNA modification; tRNA-queuosine biosynthesis. Its function is as follows. Catalyzes the NADPH-dependent reduction of 7-cyano-7-deazaguanine (preQ0) to 7-aminomethyl-7-deazaguanine (preQ1). The protein is NADPH-dependent 7-cyano-7-deazaguanine reductase of Aquifex aeolicus (strain VF5).